The primary structure comprises 410 residues: Elongation factor Tu, chloroplastic (410 aa).

One can recognise a tr-type G domain in the interval 10-214; the sequence is KPHINIGTIG…QVDKYIPTPQ (205 aa). Positions 19 to 26 are G1; sequence GHVDHGKT. 19–26 contributes to the GTP binding site; it reads GHVDHGKT. Residue T26 coordinates Mg(2+). The segment at 60 to 64 is G2; the sequence is GITIN. Residues 81-84 are G3; sequence DCPG. Residues 81–85 and 136–139 contribute to the GTP site; these read DCPGH and NKED. The segment at 136–139 is G4; that stretch reads NKED. Positions 174 to 176 are G5; it reads SAL.

The protein belongs to the TRAFAC class translation factor GTPase superfamily. Classic translation factor GTPase family. EF-Tu/EF-1A subfamily.

Its subcellular location is the plastid. The protein resides in the chloroplast. The enzyme catalyses GTP + H2O = GDP + phosphate + H(+). Its function is as follows. GTP hydrolase that promotes the GTP-dependent binding of aminoacyl-tRNA to the A-site of ribosomes during protein biosynthesis. This is Elongation factor Tu, chloroplastic (tufA) from Mesostigma viride (Green alga).